The primary structure comprises 211 residues: SOSS complex subunit B1 (211 aa).

Positions 22–92 form a DNA-binding region, OB; the sequence is IVLETGRVTK…TLYTGRGGDL (71 aa). Positions 110–211 are disordered; sequence EPNPEYSAQQ…GKETRRSSKR (102 aa). Residues 115–128 show a composition bias toward polar residues; sequence YSAQQAPNKTVQND. 2 stretches are compositionally biased toward pro residues: residues 133 to 143 and 165 to 174; these read APQPPTGPPAT and PHPPHTPSHP.

This sequence belongs to the SOSS-B family. SOSS-B1 subfamily. In terms of assembly, component of the SOSS complex, composed of SOSS-B (SOSS-B1/NABP2 or SOSS-B2/NABP1), SOSS-A/INTS3 and SOSS-C/INIP. SOSS complexes containing SOSS-B1/NABP2 are more abundant than complexes containing SOSS-B2/NABP1. Directly interacts with ATM, SOSS-A/INTS3 and RAD51. Interacts with INTS7. Post-translationally, phosphorylated by ATM in response to DNA damage. Phosphorylation prevents degradation by the proteasome, hence stabilization of the protein and accumulation within cells. In terms of processing, ubiquitinated in a FBXL5-dependent manner, leading to proteasomal degradation.

It is found in the nucleus. In terms of biological role, component of the SOSS complex, a multiprotein complex that functions downstream of the MRN complex to promote DNA repair and G2/M checkpoint. In the SOSS complex, acts as a sensor of single-stranded DNA that binds to single-stranded DNA, in particular to polypyrimidines. The SOSS complex associates with DNA lesions and influences diverse endpoints in the cellular DNA damage response including cell-cycle checkpoint activation, recombinational repair and maintenance of genomic stability. Required for efficient homologous recombination-dependent repair of double-strand breaks (DSBs) and ATM-dependent signaling pathways. This is SOSS complex subunit B1 (NABP2) from Bos taurus (Bovine).